The chain runs to 204 residues: 5'-deoxynucleotidase HDDC2 (204 aa).

An N-acetylalanine modification is found at Ala2. 2 positions are modified to phosphoserine: Ser3 and Ser5. Residues 46-148 form the HD domain; the sequence is VSDHMYRMAV…VKQLDQCEMI (103 aa). Residues His49, His77, Asp78, Glu81, Asp86, Ile87, and Asp143 each contribute to the a divalent metal cation site. Phosphoserine is present on Ser204.

Belongs to the HDDC2 family. Homodimer. Mn(2+) is required as a cofactor. It depends on Co(2+) as a cofactor. Mg(2+) serves as cofactor.

The enzyme catalyses a 2'-deoxyribonucleoside 5'-phosphate + H2O = a 2'-deoxyribonucleoside + phosphate. Catalyzes the dephosphorylation of the nucleoside 5'-monophosphates deoxyadenosine monophosphate (dAMP), deoxycytidine monophosphate (dCMP), deoxyguanosine monophosphate (dGMP) and deoxythymidine monophosphate (dTMP). This chain is 5'-deoxynucleotidase HDDC2 (HDDC2), found in Homo sapiens (Human).